Consider the following 266-residue polypeptide: Probable matrix protein (266 aa).

The disordered stretch occupies residues 158–177; that stretch reads ACSAGTGGTEEGDSDTEEEP. A compositionally biased stretch (acidic residues) spans 167-177; that stretch reads EEGDSDTEEEP.

Its subcellular location is the virion. Its function is as follows. May play a role in virion budding and release by binding the ribonucleocapsid and the host membrane. The sequence is that of Probable matrix protein from Ixodidae (hardbacked ticks).